We begin with the raw amino-acid sequence, 453 residues long: MAAVAAARRMVNGAGPGGAREQAAALTRDFLSQPRLTYKTVSGVNGPLVITSCEFTGDILRTPVSEDMLGRVFNGSGKPIDRGPAVLAEDFLDIMGQPINPQCRIYPEEMIQTGISAIDGMNSIARGQKIPIFSAAGLPHNEIAAQICRQAGLVKKSKDVMDYSEENFAIVFAAMGVNMETARFFKSDFEENGSMDNVCLFLNLANDPTIERIITPRLALTTAEFLAYQCEKHVLVILTDMSSYAEALREVSAAREEVPGRRGFPGYMYTDLATIYERAGRVEGRNGSITQIPILTMPNDDITHPIPDLTGYITEGQIYVDRQLHNRQIYPPINVLPSLSRLMKSAIGEGMTRKDHADVSNQLYACYAIGKDVQAMKAVVGEEALTSDDLLYLEFLQKFEKNFIAQGPYENRTVYETLDIGWQLLRIFPKEMLKRIPQTTLAEFYPRDSTAKH.

Residue arginine 341 participates in ATP binding.

Belongs to the ATPase alpha/beta chains family. V-ATPase is a heteromultimeric enzyme made up of two complexes: the ATP-hydrolytic V1 complex and the proton translocation V0 complex. The V1 complex consists of three catalytic AB heterodimers that form a heterohexamer, three peripheral stalks each consisting of EG heterodimers, one central rotor including subunits D and F, and the regulatory subunits C and H. The proton translocation complex V0 consists of the proton transport subunit a, a ring of proteolipid subunits c9c'', rotary subunit d, subunits e and f, and two accessory subunits.

Its function is as follows. Non-catalytic subunit of the V1 complex of vacuolar(H+)-ATPase (V-ATPase), a multisubunit enzyme composed of a peripheral complex (V1) that hydrolyzes ATP and a membrane integral complex (V0) that translocates protons. V-ATPase is responsible for acidifying and maintaining the pH of intracellular compartments and in some cell types, is targeted to the plasma membrane, where it is responsible for acidifying the extracellular environment. Essential for the proper assembly and activity of V-ATPase. This Gallus gallus (Chicken) protein is V-type proton ATPase subunit B (ATP6V1B).